Here is a 201-residue protein sequence, read N- to C-terminus: 2-phospho-L-lactate guanylyltransferase (201 aa).

The protein belongs to the CofC family. Homodimer.

The catalysed reaction is (2S)-2-phospholactate + GTP + H(+) = (2S)-lactyl-2-diphospho-5'-guanosine + diphosphate. Its pathway is cofactor biosynthesis; coenzyme F420 biosynthesis. Functionally, guanylyltransferase that catalyzes the activation of (2S)-2-phospholactate (2-PL) as (2S)-lactyl-2-diphospho-5'-guanosine, via the condensation of 2-PL with GTP. It is involved in the biosynthesis of coenzyme F420, a hydride carrier cofactor. This Natronomonas pharaonis (strain ATCC 35678 / DSM 2160 / CIP 103997 / JCM 8858 / NBRC 14720 / NCIMB 2260 / Gabara) (Halobacterium pharaonis) protein is 2-phospho-L-lactate guanylyltransferase.